Reading from the N-terminus, the 206-residue chain is Small ribosomal subunit protein uS4 (206 aa).

The 61-residue stretch at 96–156 (GRLDNVVYRM…EKAKKQARIK (61 aa)) folds into the S4 RNA-binding domain.

It belongs to the universal ribosomal protein uS4 family. Part of the 30S ribosomal subunit. Contacts protein S5. The interaction surface between S4 and S5 is involved in control of translational fidelity.

Its function is as follows. One of the primary rRNA binding proteins, it binds directly to 16S rRNA where it nucleates assembly of the body of the 30S subunit. Functionally, with S5 and S12 plays an important role in translational accuracy. The protein is Small ribosomal subunit protein uS4 of Tolumonas auensis (strain DSM 9187 / NBRC 110442 / TA 4).